The chain runs to 297 residues: Nitrogenase iron protein (297 aa).

ATP is bound at residue glycine 11–serine 18. Position 99 (cysteine 99) interacts with [4Fe-4S] cluster. Arginine 102 bears the ADP-ribosylarginine; by dinitrogenase reductase ADP-ribosyltransferase mark. Cysteine 133 lines the [4Fe-4S] cluster pocket.

This sequence belongs to the NifH/BchL/ChlL family. In terms of assembly, homodimer. Requires [4Fe-4S] cluster as cofactor. The reversible ADP-ribosylation of Arg-102 inactivates the nitrogenase reductase and regulates nitrogenase activity.

It catalyses the reaction N2 + 8 reduced [2Fe-2S]-[ferredoxin] + 16 ATP + 16 H2O = H2 + 8 oxidized [2Fe-2S]-[ferredoxin] + 2 NH4(+) + 16 ADP + 16 phosphate + 6 H(+). Functionally, the key enzymatic reactions in nitrogen fixation are catalyzed by the nitrogenase complex, which has 2 components: the iron protein and the molybdenum-iron protein. The protein is Nitrogenase iron protein of Mesorhizobium japonicum (strain LMG 29417 / CECT 9101 / MAFF 303099) (Mesorhizobium loti (strain MAFF 303099)).